The primary structure comprises 267 residues: Neuferricin (267 aa).

Positions 1–17 (MLKYLVALISMVLAVWT) are cleaved as a signal peptide. In terms of domain architecture, Cytochrome b5 heme-binding spans 53-150 (LLTKEQLSLY…RDYTPVGKLI (98 aa)).

This sequence belongs to the cytochrome b5 family. MAPR subfamily.

It is found in the secreted. In terms of biological role, heme-binding protein which promotes neuronal but not astrocyte differentiation. This Danio rerio (Zebrafish) protein is Neuferricin (cyb5d2).